Reading from the N-terminus, the 265-residue chain is Methyl-coenzyme M reductase II subunit gamma (265 aa).

Arg123 is a binding site for coenzyme M.

It belongs to the methyl-coenzyme M reductase gamma subunit family. MCR is a hexamer of two alpha, two beta, and two gamma chains, forming a dimer of heterotrimers. The cofactor is coenzyme F430.

The catalysed reaction is coenzyme B + methyl-coenzyme M = methane + coenzyme M-coenzyme B heterodisulfide. The protein operates within one-carbon metabolism; methyl-coenzyme M reduction; methane from methyl-coenzyme M: step 1/1. Component of the methyl-coenzyme M reductase (MCR) I that catalyzes the reductive cleavage of methyl-coenzyme M (CoM-S-CH3 or 2-(methylthio)ethanesulfonate) using coenzyme B (CoB or 7-mercaptoheptanoylthreonine phosphate) as reductant which results in the production of methane and the mixed heterodisulfide of CoB and CoM (CoM-S-S-CoB). This is the final step in methanogenesis. The polypeptide is Methyl-coenzyme M reductase II subunit gamma (mrtG) (Methanothermobacter marburgensis (strain ATCC BAA-927 / DSM 2133 / JCM 14651 / NBRC 100331 / OCM 82 / Marburg) (Methanobacterium thermoautotrophicum)).